A 369-amino-acid polypeptide reads, in one-letter code: Caffeine synthase 1 (369 aa).

Residue Y24 participates in S-adenosyl-L-homocysteine binding. A caffeine-binding site is contributed by T31. Residues C66, N71, D103, L104, S138, and F139 each coordinate S-adenosyl-L-homocysteine. 3 residues coordinate caffeine: Y156, H159, and W160. N177 is a Mg(2+) binding site. R225 contacts caffeine. The Mg(2+) site is built by D263, F265, and N266. F321 lines the caffeine pocket.

Belongs to the methyltransferase superfamily. Type-7 methyltransferase family. It depends on Mg(2+) as a cofactor.

The enzyme catalyses theobromine + S-adenosyl-L-methionine = caffeine + S-adenosyl-L-homocysteine + H(+). It catalyses the reaction 7-methylxanthine + S-adenosyl-L-methionine = theobromine + S-adenosyl-L-homocysteine + H(+). It functions in the pathway alkaloid biosynthesis. Involved in the biosynthesis of caffeine. Catalyzes the conversion of 7-methylxanthine (7mX) to theobromine and of theobromine to caffeine. The chain is Caffeine synthase 1 from Camellia crassicolumna (Evergreen tea).